Consider the following 238-residue polypeptide: Sugar fermentation stimulation protein homolog (238 aa).

The protein belongs to the SfsA family.

In Actinobacillus succinogenes (strain ATCC 55618 / DSM 22257 / CCUG 43843 / 130Z), this protein is Sugar fermentation stimulation protein homolog.